The sequence spans 642 residues: Frizzled-1 (642 aa).

Positions Met-1–Gly-68 are cleaved as a signal peptide. Disordered regions lie at residues Pro-26–Ala-45 and Gln-76–Gly-99. The Extracellular segment spans residues Val-69 to Trp-317. The FZ domain maps to Pro-106 to Gln-225. 5 disulfides stabilise this stretch: Cys-111–Cys-172, Cys-119–Cys-165, Cys-156–Cys-193, Cys-182–Cys-222, and Cys-186–Cys-210. A glycan (N-linked (GlcNAc...) asparagine) is linked at Asn-125. Asn-226 is a glycosylation site (N-linked (GlcNAc...) asparagine). The helical transmembrane segment at Ile-318–Val-338 threads the bilayer. Residues Asp-339–Pro-349 lie on the Cytoplasmic side of the membrane. The chain crosses the membrane as a helical span at residues Ile-350–Leu-370. The Extracellular portion of the chain corresponds to Glu-371–Cys-397. The chain crosses the membrane as a helical span at residues Thr-398 to Leu-418. Residues Ser-419–Gln-440 lie on the Cytoplasmic side of the membrane. Residues Tyr-441 to Gly-461 traverse the membrane as a helical segment. Over Gln-462 to Gly-484 the chain is Extracellular. The helical transmembrane segment at Phe-485–Phe-505 threads the bilayer. Residues Val-506–Arg-531 lie on the Cytoplasmic side of the membrane. The helical transmembrane segment at Ile-532–Tyr-552 threads the bilayer. Residues Glu-553–Pro-593 are Extracellular-facing. A helical transmembrane segment spans residues Asp-594–Phe-614. Over Trp-615–Val-642 the chain is Cytoplasmic. Residues Lys-620 to Trp-625 carry the Lys-Thr-X-X-X-Trp motif, mediates interaction with the PDZ domain of Dvl family members motif. A PDZ-binding motif is present at residues Thr-640 to Val-642.

Belongs to the G-protein coupled receptor Fz/Smo family. In terms of assembly, interacts with MYOC. Interacts with WNT7B. Ubiquitinated by ZNRF3, leading to its degradation by the proteasome. Expressed in chondrocytes.

It localises to the cell membrane. In terms of biological role, receptor for Wnt proteins. Activated by WNT7B. Activated by WNT3A, WNT3, WNT1 and to a lesser extent WNT2, but apparently not by WNT4, WNT5A, WNT5B, WNT6, WNT7A or WNT7B. Contradictory results showing activation by WNT7B have been described for mouse. Functions in the canonical Wnt/beta-catenin signaling pathway. The canonical Wnt/beta-catenin signaling pathway leads to the activation of disheveled proteins, inhibition of GSK-3 kinase, nuclear accumulation of beta-catenin and activation of Wnt target genes. A second signaling pathway involving PKC and calcium fluxes has been seen for some family members, but it is not yet clear if it represents a distinct pathway or if it can be integrated in the canonical pathway, as PKC seems to be required for Wnt-mediated inactivation of GSK-3 kinase. Both pathways seem to involve interactions with G-proteins. May be involved in transduction and intercellular transmission of polarity information during tissue morphogenesis and/or in differentiated tissues. The sequence is that of Frizzled-1 (Fzd1) from Mus musculus (Mouse).